Here is a 367-residue protein sequence, read N- to C-terminus: Dihydroorotate dehydrogenase (quinone) (367 aa).

FMN is bound by residues 61 to 65 (AGFDK) and Thr-85. Lys-65 provides a ligand contact to substrate. 110–114 (NRMGF) serves as a coordination point for substrate. FMN is bound by residues Asn-138 and Asn-169. Asn-169 contributes to the substrate binding site. Residue Ser-172 is the Nucleophile of the active site. Asn-174 contacts substrate. 2 residues coordinate FMN: Lys-212 and Thr-240. Position 241–242 (241–242 (NT)) interacts with substrate. FMN contacts are provided by residues Gly-263, Gly-292, and 313–314 (YS).

This sequence belongs to the dihydroorotate dehydrogenase family. Type 2 subfamily. Monomer. The cofactor is FMN.

The protein localises to the cell membrane. It catalyses the reaction (S)-dihydroorotate + a quinone = orotate + a quinol. It functions in the pathway pyrimidine metabolism; UMP biosynthesis via de novo pathway; orotate from (S)-dihydroorotate (quinone route): step 1/1. Functionally, catalyzes the conversion of dihydroorotate to orotate with quinone as electron acceptor. This Rhodospirillum rubrum (strain ATCC 11170 / ATH 1.1.1 / DSM 467 / LMG 4362 / NCIMB 8255 / S1) protein is Dihydroorotate dehydrogenase (quinone).